The following is a 208-amino-acid chain: Ribosome maturation factor RimP (208 aa).

The tract at residues glutamate 189 to lysine 208 is disordered.

This sequence belongs to the RimP family.

It is found in the cytoplasm. Its function is as follows. Required for maturation of 30S ribosomal subunits. This is Ribosome maturation factor RimP from Ruegeria pomeroyi (strain ATCC 700808 / DSM 15171 / DSS-3) (Silicibacter pomeroyi).